The primary structure comprises 491 residues: Glutamyl-tRNA(Gln) amidotransferase subunit A (491 aa).

Catalysis depends on charge relay system residues lysine 78 and serine 158. The active-site Acyl-ester intermediate is the serine 182.

Belongs to the amidase family. GatA subfamily. As to quaternary structure, heterotrimer of A, B and C subunits.

It carries out the reaction L-glutamyl-tRNA(Gln) + L-glutamine + ATP + H2O = L-glutaminyl-tRNA(Gln) + L-glutamate + ADP + phosphate + H(+). Allows the formation of correctly charged Gln-tRNA(Gln) through the transamidation of misacylated Glu-tRNA(Gln) in organisms which lack glutaminyl-tRNA synthetase. The reaction takes place in the presence of glutamine and ATP through an activated gamma-phospho-Glu-tRNA(Gln). The chain is Glutamyl-tRNA(Gln) amidotransferase subunit A from Bradyrhizobium sp. (strain ORS 278).